Here is a 524-residue protein sequence, read N- to C-terminus: Glucose-6-phosphate 1-dehydrogenase (524 aa).

At Ser-20 the chain carries Phosphoserine. Residues 42-49 (GASGDLAK), Arg-76, and Lys-175 contribute to the NADP(+) site. D-glucose 6-phosphate-binding positions include Lys-175, 205–209 (HYLGK), Glu-243, and Asp-262. His-267 functions as the Proton acceptor in the catalytic mechanism. Position 362 (Arg-362) interacts with NADP(+). The D-glucose 6-phosphate site is built by Lys-365 and Arg-370. Residues Lys-371, Arg-375, and Arg-398 each coordinate NADP(+). Residue Gln-400 coordinates D-glucose 6-phosphate. NADP(+) is bound by residues 406–408 (YFK), 426–428 (DLT), Arg-492, Tyr-508, and Trp-514.

This sequence belongs to the glucose-6-phosphate dehydrogenase family.

It localises to the cytoplasm. Its subcellular location is the cytosol. The enzyme catalyses D-glucose 6-phosphate + NADP(+) = 6-phospho-D-glucono-1,5-lactone + NADPH + H(+). The protein operates within carbohydrate degradation; pentose phosphate pathway; D-ribulose 5-phosphate from D-glucose 6-phosphate (oxidative stage): step 1/3. Cytosolic glucose-6-phosphate dehydrogenase that catalyzes the first and rate-limiting step of the oxidative branch within the pentose phosphate pathway/shunt, an alternative route to glycolysis for the dissimilation of carbohydrates and a major source of reducing power and metabolic intermediates for fatty acid and nucleic acid biosynthetic processes. In Drosophila melanogaster (Fruit fly), this protein is Glucose-6-phosphate 1-dehydrogenase.